The primary structure comprises 263 residues: tRNA uridine(34) hydroxylase (263 aa).

A Rhodanese domain is found at 129–223; sequence EGREIALLDT…YFEEVGGAHY (95 aa). Cysteine 183 functions as the Cysteine persulfide intermediate in the catalytic mechanism.

Belongs to the TrhO family.

It catalyses the reaction uridine(34) in tRNA + AH2 + O2 = 5-hydroxyuridine(34) in tRNA + A + H2O. In terms of biological role, catalyzes oxygen-dependent 5-hydroxyuridine (ho5U) modification at position 34 in tRNAs. The polypeptide is tRNA uridine(34) hydroxylase (Variovorax paradoxus (strain S110)).